We begin with the raw amino-acid sequence, 436 residues long: Magnesium transporter MRS2-4 (436 aa).

The tract at residues 1–56 (MGKGPLSFRRLSSIRHRKKGSAVKDDSAQTSTPSSPPPPLPIHAGGSAVGATGKAK) is disordered. Residues 12-21 (SSIRHRKKGS) are compositionally biased toward basic residues. Residues 44-53 (AGGSAVGATG) are compositionally biased toward low complexity. 2 consecutive transmembrane segments (helical) span residues 372 to 392 (LTLTIASFAIAAETLLASLFG) and 405 to 425 (VFGYFVWSVTALCIVLFMVTL). Residues 392–394 (GMN) carry the Required for magnesium transport activity motif.

It belongs to the CorA metal ion transporter (MIT) (TC 1.A.35.5) family. Expressed in the whole plant except roots.

The protein localises to the membrane. Functionally, magnesium transporter that may mediate the influx of magnesium. This is Magnesium transporter MRS2-4 (MRS2-4) from Arabidopsis thaliana (Mouse-ear cress).